A 412-amino-acid chain; its full sequence is Multifunctional CCA protein (412 aa).

G8 and R11 together coordinate ATP. CTP contacts are provided by G8 and R11. 2 residues coordinate Mg(2+): E21 and D23. Positions 92, 138, and 141 each coordinate ATP. Positions 92, 138, and 141 each coordinate CTP. An HD domain is found at 227-328 (TGIHTMMTVA…IKLFYAIDVW (102 aa)).

It belongs to the tRNA nucleotidyltransferase/poly(A) polymerase family. Bacterial CCA-adding enzyme type 1 subfamily. As to quaternary structure, monomer. Can also form homodimers and oligomers. It depends on Mg(2+) as a cofactor. Ni(2+) serves as cofactor.

The enzyme catalyses a tRNA precursor + 2 CTP + ATP = a tRNA with a 3' CCA end + 3 diphosphate. The catalysed reaction is a tRNA with a 3' CCA end + 2 CTP + ATP = a tRNA with a 3' CCACCA end + 3 diphosphate. Functionally, catalyzes the addition and repair of the essential 3'-terminal CCA sequence in tRNAs without using a nucleic acid template. Adds these three nucleotides in the order of C, C, and A to the tRNA nucleotide-73, using CTP and ATP as substrates and producing inorganic pyrophosphate. tRNA 3'-terminal CCA addition is required both for tRNA processing and repair. Also involved in tRNA surveillance by mediating tandem CCA addition to generate a CCACCA at the 3' terminus of unstable tRNAs. While stable tRNAs receive only 3'-terminal CCA, unstable tRNAs are marked with CCACCA and rapidly degraded. This chain is Multifunctional CCA protein, found in Baumannia cicadellinicola subsp. Homalodisca coagulata.